A 130-amino-acid chain; its full sequence is Small ribosomal subunit protein uS11 (130 aa).

Belongs to the universal ribosomal protein uS11 family. Part of the 30S ribosomal subunit. Interacts with proteins S7 and S18. Binds to IF-3.

Its function is as follows. Located on the platform of the 30S subunit, it bridges several disparate RNA helices of the 16S rRNA. Forms part of the Shine-Dalgarno cleft in the 70S ribosome. The polypeptide is Small ribosomal subunit protein uS11 (Acidiphilium cryptum (strain JF-5)).